A 366-amino-acid polypeptide reads, in one-letter code: Neuropeptide Y receptor type 1 (366 aa).

Topologically, residues 1–39 (MNFSTYFENLSVPNNISGNITFPISEDCALPLPMIFTLA) are extracellular. Asn2, Asn9, and Asn15 each carry an N-linked (GlcNAc...) asparagine glycan. The chain crosses the membrane as a helical span at residues 40–60 (LAYGAVIILGLSGNLALIIII). Residues 61 to 82 (LKQKEMRNVTNILIVNLSFSDL) are Cytoplasmic-facing. The helical transmembrane segment at 83–103 (LATIMCLPFTLIYTLMDHWIF) threads the bilayer. Residues 104–111 (GEVMCKLN) are Extracellular-facing. Residues Cys108 and Cys193 are joined by a disulfide bond. Residues 112–132 (EYIQCVSVTVSIFSLVLIAIE) traverse the membrane as a helical segment. Topologically, residues 133-149 (RHQLIINPRGWRPNNRH) are cytoplasmic. Residues 150–170 (ACFGITVIWGFAMACSTPLMM) form a helical membrane-spanning segment. The Extracellular portion of the chain corresponds to 171–203 (YSVLTDEPFKNISLDSYIGKYVCLEDFPEDKFR). Asn181 carries an N-linked (GlcNAc...) asparagine glycan. A helical transmembrane segment spans residues 204 to 224 (LSYTTLLFILQYLGPLCFIFV). Over 225-260 (CYTKIFLRLKRRNNMMDKIRDNKYRSSETKRINIML) the chain is Cytoplasmic. A helical transmembrane segment spans residues 261–281 (LSIVVGFALCWLPFFIFNLVF). The Extracellular portion of the chain corresponds to 282 to 294 (DWNHEAVATCNHN). Residues 295 to 315 (LLFLICHLTAMISTCVNPIFY) traverse the membrane as a helical segment. The Cytoplasmic segment spans residues 316 to 366 (GFLNKNFQRDLQFFFNFCDFRSREDDYETIAMSTMHTDVSKTSLKQASPIA). Residue Cys333 is the site of S-palmitoyl cysteine attachment.

The protein belongs to the G-protein coupled receptor 1 family.

It localises to the cell membrane. In terms of biological role, receptor for neuropeptide Y and peptide YY. The polypeptide is Neuropeptide Y receptor type 1 (npy1r) (Xenopus laevis (African clawed frog)).